The sequence spans 217 residues: Putative thymidylate synthase (217 aa).

Cysteine 139 is a catalytic residue.

Belongs to the thymidylate synthase family. Archaeal-type ThyA subfamily. Monomer.

The protein resides in the cytoplasm. Its pathway is pyrimidine metabolism; dTTP biosynthesis. In terms of biological role, may catalyze the biosynthesis of dTMP using an unknown cosubstrate. The polypeptide is Putative thymidylate synthase (Methanosarcina mazei (strain ATCC BAA-159 / DSM 3647 / Goe1 / Go1 / JCM 11833 / OCM 88) (Methanosarcina frisia)).